We begin with the raw amino-acid sequence, 607 residues long: UvrABC system protein C (607 aa).

The region spanning 15 to 93 (SEPGVYCMLD…IKKYQPRYNI (79 aa)) is the GIY-YIG domain. Positions 202 to 237 (HEVIADLIKKMEAASQQLNFELAAKVRDQIMLLRKM) constitute a UVR domain.

Belongs to the UvrC family. In terms of assembly, interacts with UvrB in an incision complex.

It is found in the cytoplasm. Functionally, the UvrABC repair system catalyzes the recognition and processing of DNA lesions. UvrC both incises the 5' and 3' sides of the lesion. The N-terminal half is responsible for the 3' incision and the C-terminal half is responsible for the 5' incision. This is UvrABC system protein C from Pseudoalteromonas translucida (strain TAC 125).